A 424-amino-acid polypeptide reads, in one-letter code: Spermatogenesis-associated protein 2-like protein (424 aa).

2 disordered regions span residues Glu233 to Ala258 and Thr273 to Leu300. Ser327 bears the Phosphoserine mark.

Belongs to the SPATA2 family.

The polypeptide is Spermatogenesis-associated protein 2-like protein (Homo sapiens (Human)).